We begin with the raw amino-acid sequence, 306 residues long: Porphobilinogen deaminase (306 aa).

An S-(dipyrrolylmethanemethyl)cysteine modification is found at Cys-240.

This sequence belongs to the HMBS family. Monomer. It depends on dipyrromethane as a cofactor.

It catalyses the reaction 4 porphobilinogen + H2O = hydroxymethylbilane + 4 NH4(+). Its pathway is porphyrin-containing compound metabolism; protoporphyrin-IX biosynthesis; coproporphyrinogen-III from 5-aminolevulinate: step 2/4. In terms of biological role, tetrapolymerization of the monopyrrole PBG into the hydroxymethylbilane pre-uroporphyrinogen in several discrete steps. The sequence is that of Porphobilinogen deaminase from Thiobacillus denitrificans (strain ATCC 25259 / T1).